The following is a 1370-amino-acid chain: DNA-directed RNA polymerase subunit beta (1370 aa).

This sequence belongs to the RNA polymerase beta chain family. In terms of assembly, the RNAP catalytic core consists of 2 alpha, 1 beta, 1 beta' and 1 omega subunit. When a sigma factor is associated with the core the holoenzyme is formed, which can initiate transcription.

It catalyses the reaction RNA(n) + a ribonucleoside 5'-triphosphate = RNA(n+1) + diphosphate. In terms of biological role, DNA-dependent RNA polymerase catalyzes the transcription of DNA into RNA using the four ribonucleoside triphosphates as substrates. This Geobacter metallireducens (strain ATCC 53774 / DSM 7210 / GS-15) protein is DNA-directed RNA polymerase subunit beta.